A 492-amino-acid polypeptide reads, in one-letter code: Aspartyl/glutamyl-tRNA(Asn/Gln) amidotransferase subunit B (492 aa).

The protein belongs to the GatB/GatE family. GatB subfamily. Heterotrimer of A, B and C subunits.

It carries out the reaction L-glutamyl-tRNA(Gln) + L-glutamine + ATP + H2O = L-glutaminyl-tRNA(Gln) + L-glutamate + ADP + phosphate + H(+). The enzyme catalyses L-aspartyl-tRNA(Asn) + L-glutamine + ATP + H2O = L-asparaginyl-tRNA(Asn) + L-glutamate + ADP + phosphate + 2 H(+). Functionally, allows the formation of correctly charged Asn-tRNA(Asn) or Gln-tRNA(Gln) through the transamidation of misacylated Asp-tRNA(Asn) or Glu-tRNA(Gln) in organisms which lack either or both of asparaginyl-tRNA or glutaminyl-tRNA synthetases. The reaction takes place in the presence of glutamine and ATP through an activated phospho-Asp-tRNA(Asn) or phospho-Glu-tRNA(Gln). This Dehalococcoides mccartyi (strain CBDB1) protein is Aspartyl/glutamyl-tRNA(Asn/Gln) amidotransferase subunit B.